The following is a 505-amino-acid chain: ATP synthase subunit alpha (505 aa).

170-177 (GDRQTGKT) is an ATP binding site.

This sequence belongs to the ATPase alpha/beta chains family. F-type ATPases have 2 components, CF(1) - the catalytic core - and CF(0) - the membrane proton channel. CF(1) has five subunits: alpha(3), beta(3), gamma(1), delta(1), epsilon(1). CF(0) has four main subunits: a(1), b(1), b'(1) and c(9-12).

The protein localises to the cellular thylakoid membrane. It catalyses the reaction ATP + H2O + 4 H(+)(in) = ADP + phosphate + 5 H(+)(out). Produces ATP from ADP in the presence of a proton gradient across the membrane. The alpha chain is a regulatory subunit. This is ATP synthase subunit alpha from Prochlorococcus marinus (strain MIT 9303).